The following is a 206-amino-acid chain: Thymidylate kinase (206 aa).

10–17 (GIDGAGKS) contributes to the ATP binding site.

This sequence belongs to the thymidylate kinase family.

It carries out the reaction dTMP + ATP = dTDP + ADP. Phosphorylation of dTMP to form dTDP in both de novo and salvage pathways of dTTP synthesis. The protein is Thymidylate kinase of Neisseria meningitidis serogroup C / serotype 2a (strain ATCC 700532 / DSM 15464 / FAM18).